A 150-amino-acid chain; its full sequence is Arginine repressor (150 aa).

It belongs to the ArgR family.

It is found in the cytoplasm. The protein operates within amino-acid biosynthesis; L-arginine biosynthesis [regulation]. Regulates arginine biosynthesis genes. This Clostridium botulinum (strain Okra / Type B1) protein is Arginine repressor.